Reading from the N-terminus, the 174-residue chain is Interferon gamma (174 aa).

A signal peptide spans Met-1–Gly-23. Residue Gln-24 is modified to Pyrrolidone carboxylic acid. 2 N-linked (GlcNAc...) asparagine glycosylation sites follow: Asn-39 and Asn-106.

It belongs to the type II (or gamma) interferon family. In terms of assembly, homodimer. Interacts with IFNGR1 (via extracellular domain); this interaction promotes IFNGR1 dimerization. As to expression, released primarily from activated T lymphocytes.

Its subcellular location is the secreted. In terms of biological role, type II interferon produced by immune cells such as T-cells and NK cells that plays crucial roles in antimicrobial, antiviral, and antitumor responses by activating effector immune cells and enhancing antigen presentation. Primarily signals through the JAK-STAT pathway after interaction with its receptor IFNGR1 to affect gene regulation. Upon IFNG binding, IFNGR1 intracellular domain opens out to allow association of downstream signaling components JAK2, JAK1 and STAT1, leading to STAT1 activation, nuclear translocation and transcription of IFNG-regulated genes. Many of the induced genes are transcription factors such as IRF1 that are able to further drive regulation of a next wave of transcription. Plays a role in class I antigen presentation pathway by inducing a replacement of catalytic proteasome subunits with immunoproteasome subunits. In turn, increases the quantity, quality, and repertoire of peptides for class I MHC loading. Increases the efficiency of peptide generation also by inducing the expression of activator PA28 that associates with the proteasome and alters its proteolytic cleavage preference. Up-regulates as well MHC II complexes on the cell surface by promoting expression of several key molecules such as cathepsins B/CTSB, H/CTSH, and L/CTSL. Participates in the regulation of hematopoietic stem cells during development and under homeostatic conditions by affecting their development, quiescence, and differentiation. This Phodopus sungorus (Striped hairy-footed hamster) protein is Interferon gamma (IFNG).